The following is a 184-amino-acid chain: Ferredoxin-thioredoxin reductase subunit A2, chloroplastic (184 aa).

A chloroplast-targeting transit peptide spans 1-71 (MTNSYALSPA…SRKNPKSTIR (71 aa)).

The protein belongs to the ferredoxin thioredoxin reductase alpha subunit family. In terms of assembly, heterodimer of subunit A (variable subunit) and subunit B (catalytic subunit). Heterodimeric FTR forms a complex with ferredoxin and thioredoxin.

The protein localises to the plastid. It localises to the chloroplast. Variable subunit of the ferredoxin-thioredoxin reductase (FTR), which catalyzes the two-electron reduction of thioredoxins by the electrons provided by reduced ferredoxin. This is Ferredoxin-thioredoxin reductase subunit A2, chloroplastic from Arabidopsis thaliana (Mouse-ear cress).